Reading from the N-terminus, the 91-residue chain is Small ribosomal subunit protein bS20 (91 aa).

The protein belongs to the bacterial ribosomal protein bS20 family.

In terms of biological role, binds directly to 16S ribosomal RNA. The protein is Small ribosomal subunit protein bS20 of Acidithiobacillus ferrooxidans (strain ATCC 23270 / DSM 14882 / CIP 104768 / NCIMB 8455) (Ferrobacillus ferrooxidans (strain ATCC 23270)).